Consider the following 237-residue polypeptide: tRNA (guanine-N(7)-)-methyltransferase (237 aa).

Residues glutamate 67, glutamate 92, aspartate 119, and aspartate 141 each contribute to the S-adenosyl-L-methionine site. Residue aspartate 141 is part of the active site. Substrate contacts are provided by residues lysine 145, aspartate 177, and 214-217 (TRYE).

The protein belongs to the class I-like SAM-binding methyltransferase superfamily. TrmB family.

It carries out the reaction guanosine(46) in tRNA + S-adenosyl-L-methionine = N(7)-methylguanosine(46) in tRNA + S-adenosyl-L-homocysteine. It functions in the pathway tRNA modification; N(7)-methylguanine-tRNA biosynthesis. Its function is as follows. Catalyzes the formation of N(7)-methylguanine at position 46 (m7G46) in tRNA. In Ruegeria pomeroyi (strain ATCC 700808 / DSM 15171 / DSS-3) (Silicibacter pomeroyi), this protein is tRNA (guanine-N(7)-)-methyltransferase.